The sequence spans 80 residues: Cell division activator CedA (80 aa).

Belongs to the CedA family.

In terms of biological role, activates the cell division inhibited by chromosomal DNA over-replication. The chain is Cell division activator CedA from Escherichia coli O1:K1 / APEC.